The following is a 335-amino-acid chain: Photosystem II assembly lipoprotein Ycf48 (335 aa).

An N-terminal signal peptide occupies residues 1–23 (MSRLFSNLFNLLLIAAIGFGLSG). C24 carries N-palmitoyl cysteine lipidation. Residue C24 is the site of S-diacylglycerol cysteine attachment.

This sequence belongs to the Ycf48 family. In terms of assembly, part of early PSII assembly complexes which includes D1 (psbA) and PsbI; not found in mature PSII. Binds to the lumenal side of PSII complexes. Interacts with YidC.

It is found in the cellular thylakoid membrane. Its function is as follows. A factor required for optimal assembly of photosystem II (PSII), acting in the early stages of PSII assembly. Also plays a role in replacement of photodamaged D1 (psbA). Assists YidC in synthesis of chlorophyll-binding proteins. In Prochlorococcus marinus (strain MIT 9313), this protein is Photosystem II assembly lipoprotein Ycf48.